We begin with the raw amino-acid sequence, 290 residues long: MLPDSSVRLNKYISESGICSRREADRYIEQGNVFLNGKRATIGDQVKPGDVVKVNGQLIEPREAEDLVLIALNKPVGIVSTTEDGERDNIVDFVNHSKRVFPIGRLDKDSQGLIFLTNHGDLVNKILRAGNDHEKEYLVTVDKPITDEFIRGMGAGVPILGTVTKKCKVKKEAPFVFRITLVQGLNRQIRRMCEHFGYEVKKLERTRIMNVSLSGIPLGEWRDLTDDELIDLFKLIENSSSEAKPKAKAKPKTAGIKRPVVKMEKTAEKGGRPASNGKRFTSPGRKKKGR.

The 66-residue stretch at 7-72 folds into the S4 RNA-binding domain; it reads VRLNKYISES…EAEDLVLIAL (66 aa). Interaction with RNA regions lie at residues 105-108 and 187-190; these read RLDK and RQIR. Asp107 (nucleophile) is an active-site residue. The tract at residues 241-290 is disordered; the sequence is SEAKPKAKAKPKTAGIKRPVVKMEKTAEKGGRPASNGKRFTSPGRKKKGR. Residues 261 to 271 are compositionally biased toward basic and acidic residues; that stretch reads VKMEKTAEKGG.

This sequence belongs to the pseudouridine synthase RsuA family. In terms of assembly, monomer.

The catalysed reaction is uridine(2604) in 23S rRNA = pseudouridine(2604) in 23S rRNA. The enzyme catalyses uridine(35) in tRNA(Tyr) = pseudouridine(35) in tRNA(Tyr). Dual specificity enzyme that catalyzes the synthesis of pseudouridine from uracil-2604 in 23S ribosomal RNA and from uracil-35 in the anticodon of tRNA(Tyr). In Escherichia coli O157:H7, this protein is Dual-specificity RNA pseudouridine synthase RluF (rluF).